The following is a 120-amino-acid chain: Large ribosomal subunit protein bL20 (120 aa).

The protein belongs to the bacterial ribosomal protein bL20 family.

Its function is as follows. Binds directly to 23S ribosomal RNA and is necessary for the in vitro assembly process of the 50S ribosomal subunit. It is not involved in the protein synthesizing functions of that subunit. This Karelsulcia muelleri (strain GWSS) (Sulcia muelleri) protein is Large ribosomal subunit protein bL20.